A 664-amino-acid chain; its full sequence is Armadillo repeat protein involved in nucleocytoplasmic transport Syo2 (664 aa).

One copy of the ARM repeat lies at 77-119 (GLVSKLIDRISDDSVEVVVEATGALRNLAIEEGYSICMDMYRK).

Belongs to the nuclear import and ribosome assembly adapter family. As to quaternary structure, forms a heterotrimeric complex with rpl5 and rpl11a or rpl11b; interaction of this complex with kap104 allows the nuclear import of the heterotrimer. Component of a hexameric 5S RNP precursor complex; this complex acts as a precursor for ribosome assembly.

Its subcellular location is the cytoplasm. It localises to the nucleus. Its function is as follows. Nuclear import adapter that specifically recruits the two functionally and topologically linked ribosomal proteins rpl5 and rpl11 (encoded by rpl11a and rpl11b). Guarantees that this cargo pair remains bound together from the time of synthesis in the cytoplasm until delivery to the nascent 5S rRNA in the nucleus. This chain is Armadillo repeat protein involved in nucleocytoplasmic transport Syo2, found in Schizosaccharomyces pombe (strain 972 / ATCC 24843) (Fission yeast).